The sequence spans 186 residues: uncharacterized protein (186 aa).

The N-terminal stretch at 1-21 (MKFFLGSALFLILTFINLVRA) is a signal peptide. Topologically, residues 22–142 (EFEFITPAED…AFSVNPIDKK (121 aa)) are extracellular. Residues asparagine 62, asparagine 75, asparagine 93, and asparagine 104 are each glycosylated (N-linked (GlcNAc...) asparagine). The chain crosses the membrane as a helical span at residues 143-163 (LAIGLSVGLSCCILIVLFLHF). Residues 164-186 (ATRRERRILKNEKELEMSSYRKH) lie on the Cytoplasmic side of the membrane.

It is found in the membrane. This is an uncharacterized protein from Schizosaccharomyces pombe (strain 972 / ATCC 24843) (Fission yeast).